A 574-amino-acid polypeptide reads, in one-letter code: Phenylalanine--tRNA ligase beta subunit (574 aa).

The B5 domain occupies 278-353 (LTPKEFEVEL…IAYGYNEIEP (76 aa)). Mg(2+) is bound by residues D331, D337, E340, and D341.

This sequence belongs to the phenylalanyl-tRNA synthetase beta subunit family. Type 2 subfamily. As to quaternary structure, tetramer of two alpha and two beta subunits. The cofactor is Mg(2+).

The protein resides in the cytoplasm. It carries out the reaction tRNA(Phe) + L-phenylalanine + ATP = L-phenylalanyl-tRNA(Phe) + AMP + diphosphate + H(+). The protein is Phenylalanine--tRNA ligase beta subunit of Thermococcus kodakarensis (strain ATCC BAA-918 / JCM 12380 / KOD1) (Pyrococcus kodakaraensis (strain KOD1)).